A 509-amino-acid polypeptide reads, in one-letter code: UDP-N-acetylmuramyl-tripeptide synthetase (509 aa).

ATP is bound at residue 124–130 (GTNGKTS). Residues 164-165 (TT), Ser191, and Arg199 each bind UDP-N-acetyl-alpha-D-muramoyl-L-alanyl-D-glutamate. Lys231 is subject to N6-carboxylysine.

Belongs to the MurCDEF family. MurE subfamily. In terms of processing, carboxylation is probably crucial for Mg(2+) binding and, consequently, for the gamma-phosphate positioning of ATP.

It localises to the cytoplasm. It participates in cell wall biogenesis; peptidoglycan biosynthesis. Its function is as follows. Catalyzes the addition of an amino acid to the nucleotide precursor UDP-N-acetylmuramoyl-L-alanyl-D-glutamate (UMAG) in the biosynthesis of bacterial cell-wall peptidoglycan. The chain is UDP-N-acetylmuramyl-tripeptide synthetase from Tropheryma whipplei (strain TW08/27) (Whipple's bacillus).